The primary structure comprises 472 residues: Acetyl-CoA decarbonylase/synthase complex subunit beta 2 (472 aa).

Positions 189, 192, 278, and 280 each coordinate [Ni-Fe-S] cluster.

Belongs to the CdhC family. Monomer. The ACDS complex is made up of alpha, epsilon, beta, gamma and delta chains with a probable stoichiometry of (alpha(2)epsilon(2))(4)-beta(8)-(gamma(1)delta(1))(8) (Potential). [Ni-Fe-S] cluster serves as cofactor.

The catalysed reaction is Co(I)-[corrinoid Fe-S protein] + acetyl-CoA + H(+) = methyl-Co(III)-[corrinoid Fe-S protein] + CO + CoA. It functions in the pathway one-carbon metabolism; methanogenesis from acetate. Its function is as follows. Part of a complex that catalyzes the reversible cleavage of acetyl-CoA, allowing growth on acetate as sole source of carbon and energy. The alpha-epsilon complex generates CO from CO(2), while the beta subunit (this protein) combines the CO with CoA and a methyl group to form acetyl-CoA. The methyl group, which is incorporated into acetyl-CoA, is transferred to the beta subunit by a corrinoid iron-sulfur protein (the gamma-delta complex). In Methanosarcina thermophila, this protein is Acetyl-CoA decarbonylase/synthase complex subunit beta 2 (cdhC2).